A 417-amino-acid chain; its full sequence is MSVGCPEPEPLHSLPCCGPGAAPVPGAGVPLLTEDMQALTLRTLAASDVTKHYELVRELGKGTYGKVDLVAYKGTGTKMALKFVNKSKTKLKNFLREVSITNSLSSSPFIIKVFDVVFETEECYVFAQEYAPAGDLFDIIPPQVGLPEDTVKRCVQQLGLALDFMHSRQLVHRDIKPENVLLFDRECRRVKLADFGMTRRVGCRVKRVSGTIPYTAPEVCQAGRADGFAVDTGVDVWAFGVLIFCVLTGNFPWEAASGADAFFEEFVRWQRGRLPGLPSQWRRFTEPALRMFQRLLALEPERRGPAKEVFRFLKHELTSELRRRPSHRARKPPGDRLPGSLRLEAPGPLKRTVLTESGSGSRPSPPSVGPVVPVPVPVPVPVPEAGLAPPAPPGRTDGRTDKSKGQVVLATAIEICV.

The 266-residue stretch at 53 to 318 folds into the Protein kinase domain; sequence YELVRELGKG…VFRFLKHELT (266 aa). Residues 59–67 and K82 contribute to the ATP site; that span reads LGKGTYGKV. Catalysis depends on D174, which acts as the Proton acceptor. The disordered stretch occupies residues 321–405; that stretch reads LRRRPSHRAR…TDGRTDKSKG (85 aa). Over residues 363–382 the composition is skewed to pro residues; that stretch reads PSPPSVGPVVPVPVPVPVPV.

This sequence belongs to the protein kinase superfamily. Ser/Thr protein kinase family.

The protein localises to the cytoplasm. It catalyses the reaction L-seryl-[protein] + ATP = O-phospho-L-seryl-[protein] + ADP + H(+). It carries out the reaction L-threonyl-[protein] + ATP = O-phospho-L-threonyl-[protein] + ADP + H(+). Its function is as follows. May be involved in signal-transduction pathways related to the control of brain development. This is Serine/threonine-protein kinase SBK1 (Sbk1) from Mus musculus (Mouse).